We begin with the raw amino-acid sequence, 83 residues long: Mitochondrial import inner membrane translocase subunit Tim8 B (83 aa).

Alanine 2 bears the N-acetylalanine mark. A Twin CX3C motif motif is present at residues 36–59 (CWDKCVEKPGNRLDSRTENCLSSC). Intrachain disulfides connect cysteine 36–cysteine 59 and cysteine 40–cysteine 55.

It belongs to the small Tim family. Heterohexamer; possibly composed of 3 copies of TIMM8B and 3 copies of TIMM13, named soluble 70 kDa complex. Associates with the TIM22 complex, whose core is composed of TIMM22.

The protein resides in the mitochondrion inner membrane. In terms of biological role, probable mitochondrial intermembrane chaperone that participates in the import and insertion of some multi-pass transmembrane proteins into the mitochondrial inner membrane. Also required for the transfer of beta-barrel precursors from the TOM complex to the sorting and assembly machinery (SAM complex) of the outer membrane. Acts as a chaperone-like protein that protects the hydrophobic precursors from aggregation and guide them through the mitochondrial intermembrane space. The chain is Mitochondrial import inner membrane translocase subunit Tim8 B (TIMM8B) from Bos taurus (Bovine).